Consider the following 109-residue polypeptide: uncharacterized protein (109 aa).

The region spanning 10–109 is the HTH hxlR-type domain; the sequence is APFEYTLSLI…WGMAQGGPHM (100 aa).

This is an uncharacterized protein from Bacillus subtilis (strain 168).